The following is a 1014-amino-acid chain: Resistance to glucose repression protein 1 (1014 aa).

Residues 1–63 (MSTNLANYFA…AVQAKNDDDF (63 aa)) form a disordered region. S2 is subject to N-acetylserine. Basic and acidic residues predominate over residues 11–34 (GKKDIENEHVNRNASHESNSKSDV). T73 is subject to Phosphothreonine. S75 is subject to Phosphoserine. 2 disordered regions span residues 90-144 (LGRS…YLIP) and 236-270 (SEGN…KNSK). Residues 104 to 115 (YDNSSNNSSSNS) are compositionally biased toward low complexity. A phosphoserine mark is found at S242 and S254. Over residues 247–260 (DLERGYGSDDENSK) the composition is skewed to basic and acidic residues. The short motif at 277 to 283 (KPILKKR) is the Nuclear localization signal element. A Phosphoserine modification is found at S311. Residues 340–463 (YPKESNSSVS…SEKSNKPTKN (124 aa)) are disordered. Polar residues-rich tracts occupy residues 343–352 (ESNSSVSLKS), 361–370 (STIPNPVGEN), 389–407 (HVQN…LENS), and 415–455 (LDQN…NPSE). S421 bears the Phosphoserine mark. A Phosphotyrosine modification is found at Y480. S490 carries the post-translational modification Phosphoserine. Disordered regions lie at residues 531–557 (EHLN…DEEH) and 570–591 (SDSG…TTSR). A phosphoserine mark is found at S570, S572, and S576. Residues 578-591 (ITDNSSVASSTTSR) show a composition bias toward polar residues. Positions 595–599 (RPIIK) match the Nuclear localization signal motif. Residues S610, S614, and S680 each carry the phosphoserine modification. The tract at residues 690 to 897 (SKEKHVPQLH…QSFRIVNNTP (208 aa)) is disordered. The segment covering 722–740 (YSSSSDSEQQFIEDSQYNS) has biased composition (low complexity). The span at 741 to 758 (SDDEEEEDDDDQEVDDNH) shows a compositional bias: acidic residues. Polar residues-rich tracts occupy residues 770 to 802 (LGKS…NFTG) and 822 to 833 (RNSSSGNFIFNS). A Nuclear localization signal motif is present at residues 873-879 (KKKALPK). The span at 884-897 (SDSSQSFRIVNNTP) shows a compositional bias: polar residues. Phosphothreonine is present on T896. Residue S898 is modified to Phosphoserine. The segment covering 959 to 972 (KKVDSVQTTRKEAS) has biased composition (basic and acidic residues). Residues 959 to 982 (KKVDSVQTTRKEASLTDSSNESLH) form a disordered region. The residue at position 980 (S980) is a Phosphoserine.

In terms of assembly, interacts with SAK1.

Its subcellular location is the nucleus. Involved in RNA processing and negative regulation of glucose repression. Regulates the level of two antigens, P43 and P70. Binds to protein phosphatase type 1. Functions with REG2 and SNF1 protein kinase to regulate growth. Might regulate SNF1 directly or indirectly. The sequence is that of Resistance to glucose repression protein 1 (REG1) from Saccharomyces cerevisiae (strain ATCC 204508 / S288c) (Baker's yeast).